We begin with the raw amino-acid sequence, 333 residues long: Cytochrome f (333 aa).

An N-terminal signal peptide occupies residues 1–16; that stretch reads MRNVFRTARLTRSARA. The chain crosses the membrane as a helical span at residues 17-36; that stretch reads IVKTLLIAIATVTFYFTSDL. 4 residues coordinate heme: Y45, C66, C69, and H70. Residues 299–319 form a helical membrane-spanning segment; sequence VKWMIAFVALVMLAQVMLVLK.

Belongs to the cytochrome f family. The 4 large subunits of the cytochrome b6-f complex are cytochrome b6, subunit IV (17 kDa polypeptide, PetD), cytochrome f and the Rieske protein, while the 4 small subunits are PetG, PetL, PetM and PetN. The complex functions as a dimer. Heme serves as cofactor.

The protein localises to the cellular thylakoid membrane. Functionally, component of the cytochrome b6-f complex, which mediates electron transfer between photosystem II (PSII) and photosystem I (PSI), cyclic electron flow around PSI, and state transitions. The protein is Cytochrome f of Nostoc punctiforme (strain ATCC 29133 / PCC 73102).